We begin with the raw amino-acid sequence, 284 residues long: NAD kinase (284 aa).

The active-site Proton acceptor is the Asp61. Residues 61–62 (DG), Arg66, 136–137 (ND), Arg147, Lys164, Asp166, and Leu201 each bind NAD(+).

It belongs to the NAD kinase family. A divalent metal cation serves as cofactor.

Its subcellular location is the cytoplasm. The enzyme catalyses NAD(+) + ATP = ADP + NADP(+) + H(+). In terms of biological role, involved in the regulation of the intracellular balance of NAD and NADP, and is a key enzyme in the biosynthesis of NADP. Catalyzes specifically the phosphorylation on 2'-hydroxyl of the adenosine moiety of NAD to yield NADP. The protein is NAD kinase of Dehalococcoides mccartyi (strain CBDB1).